The chain runs to 617 residues: Vacuolar protein sorting-associated protein 33B (617 aa).

Alanine 2 carries the N-acetylalanine modification.

The protein belongs to the STXBP/unc-18/SEC1 family. As to quaternary structure, interacts with RAB11A and VIPAS39. Associates with adaptor protein complex 3 (AP-3), clathrin:AP-3 and clathrin:HGS complexes. Post-translationally, phosphorylated on tyrosine residues. Ubiquitous.

It localises to the late endosome membrane. It is found in the lysosome membrane. The protein resides in the early endosome. Its subcellular location is the cytoplasmic vesicle. The protein localises to the clathrin-coated vesicle. It localises to the recycling endosome. Functionally, may play a role in vesicle-mediated protein trafficking to lysosomal compartments and in membrane docking/fusion reactions of late endosomes/lysosomes. Mediates phagolysosomal fusion in macrophages. Proposed to be involved in endosomal maturation implicating VIPAS39. In epithelial cells, the VPS33B:VIPAS39 complex may play a role in the apical recycling pathway and in the maintenance of the apical-basolateral polarity. Seems to be involved in the sorting of specific cargos from the trans-Golgi network to alpha-granule-destined multivesicular bodies (MVBs) promoting MVBs maturation in megakaryocytes. This is Vacuolar protein sorting-associated protein 33B (Vps33b) from Rattus norvegicus (Rat).